A 294-amino-acid polypeptide reads, in one-letter code: Nucleotide-binding protein Cbei_4857 (294 aa).

Residue 8–15 (GLSGAGKT) coordinates ATP. A GTP-binding site is contributed by 59 to 62 (DIRG).

It belongs to the RapZ-like family.

In terms of biological role, displays ATPase and GTPase activities. In Clostridium beijerinckii (strain ATCC 51743 / NCIMB 8052) (Clostridium acetobutylicum), this protein is Nucleotide-binding protein Cbei_4857.